We begin with the raw amino-acid sequence, 176 residues long: ATP-dependent protease subunit HslV (176 aa).

Thr2 is a catalytic residue. Na(+) is bound by residues Gly157, Cys160, and Thr163.

The protein belongs to the peptidase T1B family. HslV subfamily. A double ring-shaped homohexamer of HslV is capped on each side by a ring-shaped HslU homohexamer. The assembly of the HslU/HslV complex is dependent on binding of ATP.

The protein resides in the cytoplasm. It carries out the reaction ATP-dependent cleavage of peptide bonds with broad specificity.. Its activity is regulated as follows. Allosterically activated by HslU binding. Functionally, protease subunit of a proteasome-like degradation complex believed to be a general protein degrading machinery. The sequence is that of ATP-dependent protease subunit HslV from Pectobacterium carotovorum subsp. carotovorum (strain PC1).